Consider the following 271-residue polypeptide: Neurexophilin-1 (271 aa).

An N-terminal signal peptide occupies residues 1–21; that stretch reads MQAACWYVLFLLQPTVYLVTC. Residues 22-97 form an II region; sequence ANLTNGGKSE…WDWLRNSTDL (76 aa). N-linked (GlcNAc...) asparagine glycosylation is found at Asn23, Asn68, Asn93, Asn146, Asn156, and Asn162. Residues 98 to 176 are III; that stretch reads QEPRPRAKRR…LVPPTKIVEF (79 aa). Positions 177–185 are IV (linker domain); sequence DLAQQTVID. The segment at 186–271 is v (Cys-rich); the sequence is AKDSKSFNCR…HSDTPYFPSG (86 aa).

The protein belongs to the neurexophilin family.

It localises to the secreted. Its function is as follows. May be signaling molecules that resemble neuropeptides and that act by binding to alpha-neurexins and possibly other receptors. The protein is Neurexophilin-1 (NXPH1) of Homo sapiens (Human).